A 240-amino-acid polypeptide reads, in one-letter code: Pyridoxine 5'-phosphate synthase (240 aa).

Asn7 is a binding site for 3-amino-2-oxopropyl phosphate. 1-deoxy-D-xylulose 5-phosphate is bound at residue 9 to 10 (DH). Arg18 contributes to the 3-amino-2-oxopropyl phosphate binding site. The active-site Proton acceptor is the His43. Residues Arg45 and His50 each coordinate 1-deoxy-D-xylulose 5-phosphate. Glu70 serves as the catalytic Proton acceptor. Thr100 contacts 1-deoxy-D-xylulose 5-phosphate. His191 serves as the catalytic Proton donor. 3-amino-2-oxopropyl phosphate contacts are provided by residues Gly192 and 213-214 (GH).

Belongs to the PNP synthase family. Homooctamer; tetramer of dimers.

It is found in the cytoplasm. The catalysed reaction is 3-amino-2-oxopropyl phosphate + 1-deoxy-D-xylulose 5-phosphate = pyridoxine 5'-phosphate + phosphate + 2 H2O + H(+). It functions in the pathway cofactor biosynthesis; pyridoxine 5'-phosphate biosynthesis; pyridoxine 5'-phosphate from D-erythrose 4-phosphate: step 5/5. In terms of biological role, catalyzes the complicated ring closure reaction between the two acyclic compounds 1-deoxy-D-xylulose-5-phosphate (DXP) and 3-amino-2-oxopropyl phosphate (1-amino-acetone-3-phosphate or AAP) to form pyridoxine 5'-phosphate (PNP) and inorganic phosphate. In Microcystis aeruginosa (strain NIES-843 / IAM M-2473), this protein is Pyridoxine 5'-phosphate synthase.